The sequence spans 306 residues: Ribosomal RNA small subunit methyltransferase A (306 aa).

S-adenosyl-L-methionine contacts are provided by asparagine 37, valine 39, glycine 64, glutamate 85, aspartate 115, and asparagine 134.

The protein belongs to the class I-like SAM-binding methyltransferase superfamily. rRNA adenine N(6)-methyltransferase family. RsmA subfamily.

The protein localises to the cytoplasm. The enzyme catalyses adenosine(1518)/adenosine(1519) in 16S rRNA + 4 S-adenosyl-L-methionine = N(6)-dimethyladenosine(1518)/N(6)-dimethyladenosine(1519) in 16S rRNA + 4 S-adenosyl-L-homocysteine + 4 H(+). In terms of biological role, specifically dimethylates two adjacent adenosines (A1518 and A1519) in the loop of a conserved hairpin near the 3'-end of 16S rRNA in the 30S particle. May play a critical role in biogenesis of 30S subunits. This Mycobacterium leprae (strain Br4923) protein is Ribosomal RNA small subunit methyltransferase A.